The following is a 1112-amino-acid chain: Glutamate receptor-interacting protein 1 (1112 aa).

A Phosphoserine modification is found at S43. PDZ domains follow at residues 53-136 (VVEL…EYEL), 150-238 (TVEV…EYDV), 252-336 (LVEV…LPHH), 471-560 (EVVL…EFDV), 572-657 (HVKL…RKDE), and 672-754 (TVEL…KKQT). Disordered stretches follow at residues 752 to 796 (KQTD…VYPS), 841 to 886 (KRAS…AEQE), and 922 to 963 (NHEA…DVGR). Positions 869–880 (STASGFAGASDS) are enriched in low complexity. The segment covering 928–958 (ARSQLGRQASFQERSNSRPHYSQTTRSNTLP) has biased composition (polar residues). One can recognise a PDZ 7 domain in the interval 988–1070 (KVTLYKDSGM…KLDLVISRNP (83 aa)). The interval 1077–1112 (IEQPALPSDWSEQNSAFFQQPSHGGNLETREPTNTL) is disordered. Polar residues predominate over residues 1086–1099 (WSEQNSAFFQQPSH).

As to quaternary structure, interacts with EFNB1, EPHA7, EPHB2, EFNB3, KIF5A, KIF5C, KIF5B and the C-terminal tail of PRLHR. Forms a ternary complex with GRIA2 and CSPG4. Can form homomultimers or heteromultimers with GRIP2. Interacts with GRIA2, GRIA3, GRIPAP1/GRASP1, PPFIA1, PPFIA4, FRAS1, PLCD4, PTPRF and liprins-alpha. Interacts with ATAD1 in an ATP-dependent manner. ATAD1-catalyzed ATP hydrolysis disrupts binding to ATAD1 and to GRIA2 and leads to AMPAR complex disassembly. Interacts with SLC30A9. Interacts with BUD23. Forms a complex with NSG1, GRIA2 and STX12; controls the intracellular fate of AMPAR and the endosomal sorting of the GRIA2 subunit toward recycling and membrane targeting. Interacts with NSG1. Expressed in brain, testis and retina. In brain highly expressed in the olfactory bulb, cortex and hippocampus and lower level in thalamus, cerebellum and spinal cord. In brain it is found in the perikaryon, dendrites, dendritic shafts, dendritic spines and, excitatory and inhibitory synapses of neurons. In retina, it is most abundant in the plexiform layers than in perikarya.

Its subcellular location is the cytoplasmic vesicle. The protein resides in the perikaryon. The protein localises to the cell projection. It is found in the dendrite. It localises to the cytoplasm. Its subcellular location is the endomembrane system. The protein resides in the postsynaptic cell membrane. The protein localises to the postsynaptic density. It is found in the endoplasmic reticulum membrane. May play a role as a localized scaffold for the assembly of a multiprotein signaling complex and as mediator of the trafficking of its binding partners at specific subcellular location in neurons. Through complex formation with NSG1, GRIA2 and STX12 controls the intracellular fate of AMPAR and the endosomal sorting of the GRIA2 subunit toward recycling and membrane targeting. This Rattus norvegicus (Rat) protein is Glutamate receptor-interacting protein 1 (Grip1).